Here is a 209-residue protein sequence, read N- to C-terminus: Uracil phosphoribosyltransferase (209 aa).

5-phospho-alpha-D-ribose 1-diphosphate-binding positions include Arg-79, Arg-104, and 131 to 139; that span reads DPMLATGGS. Uracil-binding positions include Ile-194 and 199-201; that span reads GDA. Asp-200 is a 5-phospho-alpha-D-ribose 1-diphosphate binding site.

The protein belongs to the UPRTase family. Mg(2+) is required as a cofactor.

It catalyses the reaction UMP + diphosphate = 5-phospho-alpha-D-ribose 1-diphosphate + uracil. Its pathway is pyrimidine metabolism; UMP biosynthesis via salvage pathway; UMP from uracil: step 1/1. Its activity is regulated as follows. Allosterically activated by GTP. Its function is as follows. Catalyzes the conversion of uracil and 5-phospho-alpha-D-ribose 1-diphosphate (PRPP) to UMP and diphosphate. This chain is Uracil phosphoribosyltransferase, found in Streptococcus agalactiae serotype III (strain NEM316).